A 671-amino-acid polypeptide reads, in one-letter code: Solute carrier family 53 member 1 (671 aa).

The segment at 1-193 (MKFAEHLTAH…DIDRLIQETE (193 aa)) is important for promoting lysosomal/autophagosomal degradation of PXo bodies following inorganic phosphate (Pi) starvation. Over 1-228 (MKFAEHLTAH…EQQSPWTTFK (228 aa)) the chain is Cytoplasmic. The region spanning 2–218 (KFAEHLTAHI…MKRLRVPPLG (217 aa)) is the SPX domain. The tract at residues 152 to 159 (KILKKHDK) is important for inositol polyphosphate binding. The chain crosses the membrane as a helical span at residues 229–253 (VGLFSGAFVVLFITVVIAAMFYGFG). Topologically, residues 254–255 (EN) are extracellular. A helical membrane pass occupies residues 256–287 (WRAGMRMFRAPFLIIECLFLWGVNVYGWRSSG). Topologically, residues 288–300 (VNHVLIFELDPRN) are cytoplasmic. Residues 301-328 (HLSEQNIMEVASVFGVIWACCVLSYIFC) form a helical membrane-spanning segment. The Extracellular segment spans residues 329–334 (DPLGIP). The helical transmembrane segment at 335–356 (QYAAPLCLYTLMAAFLLNPTKT) threads the bilayer. The segment at residues 357-374 (FHHEARFWAIRILIRVIM) is an intramembrane region (helical). The Cytoplasmic portion of the chain corresponds to 375 to 379 (APFCF). Residues 380–413 (VNFADFWLADQLNSMVPAFLDIPFLICFFGRSPT) form a discontinuously helical membrane-spanning segment. Phosphate-binding residues include D389 and N392. Residues 414-415 (WH) are Extracellular-facing. Residues 416-455 (KAGKAASHCVEYVSLLHPIVAIMPAYFRFAQCIRRYRDTK) traverse the membrane as a discontinuously helical segment. In terms of domain architecture, EXS spans 423–627 (HCVEYVSLLH…DCSDQTTILR (205 aa)). Residue E456 is a topological domain, cytoplasmic. The chain crosses the membrane as a helical span at residues 457–488 (SFPHLVNAAKYATSFFVVIFAHKYHTTTDTYP). The phosphate site is built by K466 and Y467. Over 489–491 (LSK) the chain is Extracellular. The chain crosses the membrane as a helical span at residues 492–519 (ENPWFYCWITAAIFSSCYAYTWDIKMDW). Over 520–538 (GLFDSKAGDNRFLREEIVY) the chain is Cytoplasmic. The discontinuously helical transmembrane segment at 539 to 570 (SSTWFYYFGIIEDLILRFSWTLSMSLIEAGYI) threads the bilayer. Residues R555, R586, and R587 each contribute to the phosphate site. The chain crosses the membrane as a helical span at residues 571-609 (EGDVMMTILSPLEVFRRFIWNYFRLENEHLNNVGKFRAV). The Cytoplasmic segment spans residues 610 to 671 (RDISVAPMDC…QGESIEDLCS (62 aa)).

This sequence belongs to the SYG1 (TC 2.A.94) family. Homodimer. Interacts with the FAR/SIN/STRIPAK complex members Cka and Pp2A-29B. In terms of tissue distribution, detected in PXo bodies found in the enterocytes and progenitors of the midgut and in the hindgut, but rarely occur in the Malpighian tubules, crop, brain, muscles and germlines (at protein level).

The protein localises to the membrane. It carries out the reaction phosphate(in) = phosphate(out). Inorganic ion transporter that mediates phosphate ion export across the cell membrane. Plays a major role in phosphate homeostasis, preventing intracellular phosphate accumulation and possible calcium phosphate precipitation, ultimately preserving calcium signaling. Binds inositol hexakisphosphate (Ins6P) and similar inositol polyphosphates, such as 5-diphospho-inositol pentakisphosphate (5-InsP7), which are important intracellular signaling molecules involved in regulation of phosphate flux. In enterocytes and differentiating progenitors of the gut, promotes the biogenesis and maintenance of organelles called PXo bodies that store intracellular inorganic phosphate (Pi), and also regulates Cka-JNK mediated tissue homeostasis in response to Pi availability in these tissues. Under conditions of adequate Pi, transports Pi into PXo bodies which convert and store the Pi in the form of phospholipids. It also inhibits Cka at the post-transcriptional level to prevent Cka-bsk/JNK mediated cell proliferation. Upon Pi starvation, Pxo expression is down-regulated resulting in the PXo bodies decreasing in phospholipid content until they undergo lysosomal/autophagosomal degradation and release the stored Pi back into the cytosol for use by the cell. Decrease in Pxo expression also activates the Cka protein, which moves to the nucleus to activate bsk/JNK which then induces nearby progenitor cells to proliferate and form new absorptive cells, probably helping the organism to cope with the nutrient deficiency by maximizing absorption of dietary Pi. This Drosophila melanogaster (Fruit fly) protein is Solute carrier family 53 member 1.